A 597-amino-acid chain; its full sequence is Probable translation initiation factor IF-2 (597 aa).

Positions 10 to 226 constitute a tr-type G domain; that stretch reads LRTPIVAVLG…LMGLSQRFMK (217 aa). Residues 19-26 are G1; sequence GHVDHGKT. 19-26 lines the GTP pocket; the sequence is GHVDHGKT. The G2 stretch occupies residues 44–48; that stretch reads AITQH. Positions 81 to 84 are G3; that stretch reads DTPG. Residues 81–85 and 135–138 contribute to the GTP site; these read DTPGH and NKVD. The G4 stretch occupies residues 135 to 138; it reads NKVD. A G5 region spans residues 203-205; it reads SAI.

The protein belongs to the TRAFAC class translation factor GTPase superfamily. Classic translation factor GTPase family. IF-2 subfamily.

In terms of biological role, function in general translation initiation by promoting the binding of the formylmethionine-tRNA to ribosomes. Seems to function along with eIF-2. The sequence is that of Probable translation initiation factor IF-2 from Halorubrum lacusprofundi (strain ATCC 49239 / DSM 5036 / JCM 8891 / ACAM 34).